The primary structure comprises 233 residues: UPF0128 protein MJ1463 (233 aa).

This sequence belongs to the UPF0128 family.

The protein is UPF0128 protein MJ1463 of Methanocaldococcus jannaschii (strain ATCC 43067 / DSM 2661 / JAL-1 / JCM 10045 / NBRC 100440) (Methanococcus jannaschii).